The primary structure comprises 98 residues: UPF0358 protein LCA_1078 (98 aa).

It belongs to the UPF0358 family.

This Latilactobacillus sakei subsp. sakei (strain 23K) (Lactobacillus sakei subsp. sakei) protein is UPF0358 protein LCA_1078.